The primary structure comprises 76 residues: UPF0270 protein PSPA7_1664 (76 aa).

It belongs to the UPF0270 family.

This Pseudomonas paraeruginosa (strain DSM 24068 / PA7) (Pseudomonas aeruginosa (strain PA7)) protein is UPF0270 protein PSPA7_1664.